An 897-amino-acid polypeptide reads, in one-letter code: Staphylococcal nuclease domain-containing protein 1 (897 aa).

TNase-like domains lie at 18–167 (QLQR…LWSE), 194–329 (KPVN…IWKD), 342–499 (RQFV…LHSK), and 528–663 (GRSE…LWAN). In terms of domain architecture, Tudor spans 732 to 790 (APRRGEFCIAKFADGEWYRARVEKVESPAKVHVFYIDYGNREVLSSTRLAALPPAFSTR).

It is found in the cytoplasm. The sequence is that of Staphylococcal nuclease domain-containing protein 1 (snd1) from Danio rerio (Zebrafish).